The following is a 564-amino-acid chain: E3 ubiquitin-protein ligase hrd-like protein 1 (564 aa).

A helical transmembrane segment spans residues Ser-17 to Phe-37. An N-linked (GlcNAc...) asparagine glycan is attached at Asn-53. 7 helical membrane-spanning segments follow: residues Tyr-61–Leu-81, Leu-86–Ile-106, Gln-123–Gln-143, Val-148–Thr-168, Lys-185–Ser-205, Pro-215–Phe-235, and Leu-272–Leu-292. The RING-type; atypical zinc-finger motif lies at Cys-335 to Arg-373. One can recognise a CUE domain in the interval Gln-432–Ile-474.

It is found in the membrane. In terms of biological role, proposed to have a role in neuroprotection. This Caenorhabditis elegans protein is E3 ubiquitin-protein ligase hrd-like protein 1 (hrdl-1).